Consider the following 698-residue polypeptide: Methionine synthase reductase (698 aa).

The Flavodoxin-like domain occupies 5-147 (LLLYATQQGQ…VVEPWIAGLW (143 aa)). 93 to 124 (LLGLGDSEYTYFCNGGKIIDKRLQELGARHFY) provides a ligand contact to FMN. Residues 166 to 247 (ALPVASPASS…ASLNIPGLPP (82 aa)) are hinge. Phosphoserine occurs at positions 171 and 189. One can recognise an FAD-binding FR-type domain in the interval 271–533 (DPVFQVPISK…PRTTNSFHLP (263 aa)). Lys-291 lines the NADP(+) pocket. Residues 451–454 (RPYS) and 487–490 (GVCT) each bind FAD. NADP(+) is bound by residues 610–611 (SR), 624–626 (YVQ), and Asp-659. Trp-697 provides a ligand contact to FAD.

Forms a multiprotein complex with MMACHC, MMADHC and MTR. It depends on FAD as a cofactor. The cofactor is FMN. Found in all tissues tested, particularly abundant in skeletal muscle.

The protein resides in the cytoplasm. It carries out the reaction 2 methylcob(III)alamin-[methionine synthase] + 2 S-adenosyl-L-homocysteine + NADP(+) + H(+) = 2 cob(II)alamin-[methionine synthase] + 2 S-adenosyl-L-methionine + NADPH. It catalyses the reaction 2 cob(II)alamin + A + 2 H2O + 2 H(+) = 2 aquacob(III)alamin + AH2. Key enzyme in methionine and folate homeostasis responsible for the reactivation of methionine synthase (MTR/MS) activity by catalyzing the reductive methylation of MTR-bound cob(II)alamin. Cobalamin (vitamin B12) forms a complex with MTR to serve as an intermediary in methyl transfer reactions that cycles between MTR-bound methylcob(III)alamin and MTR bound-cob(I)alamin forms, and occasional oxidative escape of the cob(I)alamin intermediate during the catalytic cycle leads to the inactive cob(II)alamin species. The processing of cobalamin in the cytosol occurs in a multiprotein complex composed of at least MMACHC, MMADHC, MTRR and MTR which may contribute to shuttle safely and efficiently cobalamin towards MTR in order to produce methionine. Also necessary for the utilization of methyl groups from the folate cycle, thereby affecting transgenerational epigenetic inheritance. Also acts as a molecular chaperone for methionine synthase by stabilizing apoMTR and incorporating methylcob(III)alamin into apoMTR to form the holoenzyme. Also serves as an aquacob(III)alamin reductase by reducing aquacob(III)alamin to cob(II)alamin; this reduction leads to stimulation of the conversion of apoMTR and aquacob(III)alamin to MTR holoenzyme. This Homo sapiens (Human) protein is Methionine synthase reductase.